The sequence spans 563 residues: Arginine--tRNA ligase (563 aa).

The 'HIGH' region signature appears at 121–131 (PNIAKPFSIGH).

It belongs to the class-I aminoacyl-tRNA synthetase family. As to quaternary structure, monomer.

It localises to the cytoplasm. It carries out the reaction tRNA(Arg) + L-arginine + ATP = L-arginyl-tRNA(Arg) + AMP + diphosphate. The polypeptide is Arginine--tRNA ligase (Streptococcus pneumoniae (strain Taiwan19F-14)).